A 289-amino-acid chain; its full sequence is 4-diphosphocytidyl-2-C-methyl-D-erythritol kinase (289 aa).

Lys10 is an active-site residue. 94-104 is an ATP binding site; sequence PVAAGLAGGSS. Residue Asp136 is part of the active site.

The protein belongs to the GHMP kinase family. IspE subfamily.

It catalyses the reaction 4-CDP-2-C-methyl-D-erythritol + ATP = 4-CDP-2-C-methyl-D-erythritol 2-phosphate + ADP + H(+). It participates in isoprenoid biosynthesis; isopentenyl diphosphate biosynthesis via DXP pathway; isopentenyl diphosphate from 1-deoxy-D-xylulose 5-phosphate: step 3/6. Functionally, catalyzes the phosphorylation of the position 2 hydroxy group of 4-diphosphocytidyl-2C-methyl-D-erythritol. The protein is 4-diphosphocytidyl-2-C-methyl-D-erythritol kinase of Bacillus cereus (strain G9842).